Here is a 109-residue protein sequence, read N- to C-terminus: Putative pterin-4-alpha-carbinolamine dehydratase (109 aa).

It belongs to the pterin-4-alpha-carbinolamine dehydratase family.

It catalyses the reaction (4aS,6R)-4a-hydroxy-L-erythro-5,6,7,8-tetrahydrobiopterin = (6R)-L-erythro-6,7-dihydrobiopterin + H2O. The polypeptide is Putative pterin-4-alpha-carbinolamine dehydratase (Rickettsia canadensis (strain McKiel)).